The primary structure comprises 101 residues: uncharacterized protein (101 aa).

The N-terminal stretch at 1-25 is a signal peptide; sequence MISIPFRSTMSRTLVFIILPTVLSC.

This is an uncharacterized protein from Saccharomyces cerevisiae (strain ATCC 204508 / S288c) (Baker's yeast).